The sequence spans 250 residues: Ubiquinone/menaquinone biosynthesis C-methyltransferase UbiE (250 aa).

Residues Thr-73, Asp-94, and 122–123 each bind S-adenosyl-L-methionine; that span reads DA.

Belongs to the class I-like SAM-binding methyltransferase superfamily. MenG/UbiE family.

It catalyses the reaction a 2-demethylmenaquinol + S-adenosyl-L-methionine = a menaquinol + S-adenosyl-L-homocysteine + H(+). It carries out the reaction a 2-methoxy-6-(all-trans-polyprenyl)benzene-1,4-diol + S-adenosyl-L-methionine = a 5-methoxy-2-methyl-3-(all-trans-polyprenyl)benzene-1,4-diol + S-adenosyl-L-homocysteine + H(+). The protein operates within quinol/quinone metabolism; menaquinone biosynthesis; menaquinol from 1,4-dihydroxy-2-naphthoate: step 2/2. It participates in cofactor biosynthesis; ubiquinone biosynthesis. In terms of biological role, methyltransferase required for the conversion of demethylmenaquinol (DMKH2) to menaquinol (MKH2) and the conversion of 2-polyprenyl-6-methoxy-1,4-benzoquinol (DDMQH2) to 2-polyprenyl-3-methyl-6-methoxy-1,4-benzoquinol (DMQH2). This Coxiella burnetii (strain RSA 331 / Henzerling II) protein is Ubiquinone/menaquinone biosynthesis C-methyltransferase UbiE.